The following is a 558-amino-acid chain: Energy-dependent translational throttle protein EttA (558 aa).

ABC transporter domains lie at Tyr-6–Gly-256 and Val-322–His-552. Gly-38–Ser-45 lines the ATP pocket. The interval Gly-94 to Asp-136 is arm. Residues Gly-239–Val-320 form a ptIM region. Gly-354–Thr-361 is a binding site for ATP.

It belongs to the ABC transporter superfamily. ABCF family. Translational throttle EttA subfamily. In terms of assembly, monomer. Probably contacts ribosomal proteins L1, L5, L33 and S7, the 16S and 23S rRNA and the P-site containing tRNA(fMet).

The protein localises to the cytoplasm. It catalyses the reaction ATP + H2O = ADP + phosphate + H(+). A translation factor that gates the progression of the 70S ribosomal initiation complex (IC, containing tRNA(fMet) in the P-site) into the translation elongation cycle by using a mechanism sensitive to the ATP/ADP ratio. Binds to the 70S ribosome E-site where it modulates the state of the translating ribosome during subunit translocation. ATP hydrolysis probably frees it from the ribosome, which can enter the elongation phase. The protein is Energy-dependent translational throttle protein EttA of Mycobacterium tuberculosis (strain CDC 1551 / Oshkosh).